Consider the following 155-residue polypeptide: Cytochrome c-type biogenesis protein CcmE (155 aa).

Residues 1–8 lie on the Cytoplasmic side of the membrane; the sequence is MNPLRKKR. The helical; Signal-anchor for type II membrane protein transmembrane segment at 9 to 29 threads the bilayer; the sequence is LLIIAALLAGVGLAMTLALGA. Residues 30-155 lie on the Periplasmic side of the membrane; it reads LKENINLFYT…GGSSTPAKQG (126 aa). Heme is bound by residues His-124 and Tyr-128. The tract at residues 134 to 155 is disordered; the sequence is TKALRDSGQAAPGGSSTPAKQG.

It belongs to the CcmE/CycJ family.

It is found in the cell inner membrane. Heme chaperone required for the biogenesis of c-type cytochromes. Transiently binds heme delivered by CcmC and transfers the heme to apo-cytochromes in a process facilitated by CcmF and CcmH. In Pseudomonas savastanoi pv. phaseolicola (strain 1448A / Race 6) (Pseudomonas syringae pv. phaseolicola (strain 1448A / Race 6)), this protein is Cytochrome c-type biogenesis protein CcmE.